The following is a 358-amino-acid chain: Alpha-ketoglutarate-dependent L-arginine hydroxylase (358 aa).

The segment at 1–21 (MTESPTTHHGAAPPDSVATPV) is disordered. Residues 117–135 (LSFLLMLYAGLLGDVFGWA) traverse the membrane as a helical segment. 156 to 158 (LVS) is a binding site for L-arginine. 2 residues coordinate Fe cation: H168 and E170. T194 is a binding site for 2-oxoglutarate. An L-arginine-binding site is contributed by 268–270 (DGD). H316 provides a ligand contact to Fe cation. Residues R330 and R334 each coordinate 2-oxoglutarate. Residue R334 coordinates L-arginine.

This sequence belongs to the clavaminate synthase family. The cofactor is Fe cation.

It is found in the membrane. The catalysed reaction is L-arginine + 2-oxoglutarate + O2 = (2S,3S)-hydroxyarginine + succinate + CO2. It participates in antibiotic biosynthesis. Involved in the biosynthesis of capreomycidine, an unusual amino acid used by non-ribosomal peptide synthases (NRPS) to make the tuberactinomycin class of peptide antibiotics such as viomycin and capreomycin. Catalyzes the stereospecific hydroxylation of the C3 of (2S)-arginine to generate (3S)-hydroxy-(2S)-arginine. Usually clavaminic acid synthase-like oxygenases catalyze the formation of threo diastereomers, however VioC produces the erythro diastereomer of beta-carbon-hydroxylated L-arginine. It exerts a broad substrate specificity by accepting the analogs L-homoarginine and L-canavanine for the beta-carbon hydroxylation. The sequence is that of Alpha-ketoglutarate-dependent L-arginine hydroxylase (vioC) from Streptomyces vinaceus.